The primary structure comprises 219 residues: Small ribosomal subunit protein uS3 (219 aa).

The region spanning 38-106 is the KH type-2 domain; that stretch reads IREYIENRLK…RVHINIFEVK (69 aa).

It belongs to the universal ribosomal protein uS3 family. Part of the 30S ribosomal subunit. Forms a tight complex with proteins S10 and S14.

Its function is as follows. Binds the lower part of the 30S subunit head. Binds mRNA in the 70S ribosome, positioning it for translation. The protein is Small ribosomal subunit protein uS3 of Halalkalibacterium halodurans (strain ATCC BAA-125 / DSM 18197 / FERM 7344 / JCM 9153 / C-125) (Bacillus halodurans).